A 106-amino-acid polypeptide reads, in one-letter code: Thiosulfate sulfurtransferase GlpE (106 aa).

In terms of domain architecture, Rhodanese spans 16-104 (REQGAVLVDV…WRATYPDETV (89 aa)). Residue Cys64 is the Cysteine persulfide intermediate of the active site.

The protein belongs to the GlpE family.

Its subcellular location is the cytoplasm. It carries out the reaction thiosulfate + hydrogen cyanide = thiocyanate + sulfite + 2 H(+). It catalyses the reaction thiosulfate + [thioredoxin]-dithiol = [thioredoxin]-disulfide + hydrogen sulfide + sulfite + 2 H(+). Transferase that catalyzes the transfer of sulfur from thiosulfate to thiophilic acceptors such as cyanide or dithiols. May function in a CysM-independent thiosulfate assimilation pathway by catalyzing the conversion of thiosulfate to sulfite, which can then be used for L-cysteine biosynthesis. In Pseudomonas savastanoi pv. phaseolicola (strain 1448A / Race 6) (Pseudomonas syringae pv. phaseolicola (strain 1448A / Race 6)), this protein is Thiosulfate sulfurtransferase GlpE.